The sequence spans 100 residues: Protein MEN-8 (100 aa).

An N-terminal signal peptide occupies residues 1–33 (MANNMKSATFCKATWAIFLVALAILVQLKGSEA). Cystine bridges form between Cys38–Cys76, Cys48–Cys65, Cys66–Cys91, and Cys78–Cys98.

It belongs to the A9/FIL1 family.

It localises to the secreted. This is Protein MEN-8 (MEN-8) from Silene latifolia (White campion).